We begin with the raw amino-acid sequence, 187 residues long: GTP cyclohydrolase 1 (187 aa).

3 residues coordinate Zn(2+): cysteine 74, histidine 77, and cysteine 145.

It belongs to the GTP cyclohydrolase I family. In terms of assembly, homomer.

The catalysed reaction is GTP + H2O = 7,8-dihydroneopterin 3'-triphosphate + formate + H(+). The protein operates within cofactor biosynthesis; 7,8-dihydroneopterin triphosphate biosynthesis; 7,8-dihydroneopterin triphosphate from GTP: step 1/1. This is GTP cyclohydrolase 1 from Sulfurihydrogenibium sp. (strain YO3AOP1).